The following is a 420-amino-acid chain: L-rhamnose isomerase (420 aa).

Mn(2+) contacts are provided by H262, D294, and D296.

Belongs to the rhamnose isomerase family. As to quaternary structure, homotetramer. It depends on Mn(2+) as a cofactor.

It localises to the cytoplasm. It carries out the reaction L-rhamnopyranose = L-rhamnulose. Its pathway is carbohydrate degradation; L-rhamnose degradation; glycerone phosphate from L-rhamnose: step 1/3. Catalyzes the interconversion of L-rhamnose and L-rhamnulose. This chain is L-rhamnose isomerase, found in Pectobacterium carotovorum subsp. carotovorum (strain PC1).